We begin with the raw amino-acid sequence, 355 residues long: Tetraacyldisaccharide 4'-kinase (355 aa).

An ATP-binding site is contributed by 49–56; sequence SAGGTGKT.

The protein belongs to the LpxK family.

It carries out the reaction a lipid A disaccharide + ATP = a lipid IVA + ADP + H(+). It participates in glycolipid biosynthesis; lipid IV(A) biosynthesis; lipid IV(A) from (3R)-3-hydroxytetradecanoyl-[acyl-carrier-protein] and UDP-N-acetyl-alpha-D-glucosamine: step 6/6. Functionally, transfers the gamma-phosphate of ATP to the 4'-position of a tetraacyldisaccharide 1-phosphate intermediate (termed DS-1-P) to form tetraacyldisaccharide 1,4'-bis-phosphate (lipid IVA). This chain is Tetraacyldisaccharide 4'-kinase, found in Chlorobium phaeobacteroides (strain DSM 266 / SMG 266 / 2430).